A 28-amino-acid polypeptide reads, in one-letter code: Turritoxin F21-2 (28 aa).

As to expression, expressed by the venom duct.

It is found in the secreted. In terms of biological role, potent inhibitor of human alpha-3-beta-2 nAChRs (IC(50)=566.2 nM). Irreversibly inhibits the acetylcholine-induced response on human alpha-7/CHRNA7 (55% inhibition at 5.6 uM) and alpha-3-beta-2/CHRNA3-CHRNB2 (91% inhibition) nAChRs. The polypeptide is Turritoxin F21-2 (Polystira nobilis (Sea snail)).